The chain runs to 324 residues: FCS-Like Zinc finger 11 (324 aa).

An FLZ-type zinc finger spans residues 266–309 (NFLGICNFCNKKLGGGDDIYMYREKSFCSEECRSEEMMIDEEDL).

The protein belongs to the FLZ family. In terms of assembly, interacts with KIN10 and KIN11 via its FLZ-type zinc finger domain. Forms heterodimer with FLZ2 in vitro.

Its subcellular location is the cytoplasm. It localises to the nucleus. Functionally, may act as an adapter to facilitate the interaction of SnRK1 complex with effector proteins, conferring tissue- and stimulus-type specific differences in the SnRK1 regulation pathway. This Arabidopsis thaliana (Mouse-ear cress) protein is FCS-Like Zinc finger 11.